Consider the following 727-residue polypeptide: Capsid protein VP1 (727 aa).

Basic residues predominate over residues 1-10 (MAPPAKRARR). 3 disordered regions span residues 1-38 (MAPP…SDAA), 95-120 (VLTD…PPPH), and 141-184 (LAPM…VGIS). Positions 4–13 (PAKRARRGLV) match the Nuclear localization signal motif. A phospholipase A2-like region spans residues 19-64 (YLGPGNSLDQGEPTNPSDAAAKEHDEAYAAYLRSGKNPYLYFSPAD). Residues 25–35 (SLDQGEPTNPS) are compositionally biased toward polar residues. The span at 166–183 (SGNGSGGGGGGGSGGVGI) shows a compositional bias: gly residues. Asparagine 323 contributes to the Mg(2+) binding site. Residues cysteine 633 and cysteine 637 are joined by a disulfide bond.

It belongs to the parvoviridae capsid protein family. As to quaternary structure, interacts with host TFRC.

The protein resides in the virion. It is found in the host nucleus. Its function is as follows. Capsid protein self-assembles to form an icosahedral capsid with a T=1 symmetry, about 22 nm in diameter, and consisting of 60 copies of two size variants of the capsid proteins, VP1 and VP2, which differ by the presence of an N-terminal extension in the minor protein VP1. The capsid encapsulates the genomic ssDNA. Capsid proteins are responsible for the attachment to host cell receptors. This attachment induces virion internalization predominantly through clathrin-dependent endocytosis. Binding to the host receptors also induces capsid rearrangements leading to surface exposure of VP1 N-terminus, specifically its phospholipase A2-like region and putative nuclear localization signal(s). VP1 N-terminus might serve as a lipolytic enzyme to breach the endosomal membrane during entry into host cell and might contribute to virus transport to the nucleus. The protein is Capsid protein VP1 of Feline panleukopenia virus (strain 193) (FPV).